Here is a 348-residue protein sequence, read N- to C-terminus: GTPase Obg 1 (348 aa).

One can recognise an Obg domain in the interval 1-159 (MSFVDEAKIH…HCVLLKLKIV (159 aa)). An OBG-type G domain is found at 160-329 (SDVGIIGMPN…LHAQVKKAVV (170 aa)). GTP is bound by residues 166-173 (GMPNAGKS), 191-195 (FTTLE), 212-215 (DIPG), 279-282 (NKCD), and 310-312 (GDE). Mg(2+)-binding residues include serine 173 and threonine 193.

This sequence belongs to the TRAFAC class OBG-HflX-like GTPase superfamily. OBG GTPase family. As to quaternary structure, monomer. It depends on Mg(2+) as a cofactor.

It localises to the cytoplasm. Functionally, an essential GTPase which binds GTP, GDP and possibly (p)ppGpp with moderate affinity, with high nucleotide exchange rates and a fairly low GTP hydrolysis rate. Plays a role in control of the cell cycle, stress response, ribosome biogenesis and in those bacteria that undergo differentiation, in morphogenesis control. The sequence is that of GTPase Obg 1 from Anaplasma marginale (strain Florida).